The chain runs to 683 residues: DNA-directed RNA polymerase subunit beta' (683 aa).

Zn(2+) is bound by residues C69, C71, C87, and C90. Positions 489, 491, and 493 each coordinate Mg(2+).

The protein belongs to the RNA polymerase beta' chain family. RpoC1 subfamily. As to quaternary structure, in plastids the minimal PEP RNA polymerase catalytic core is composed of four subunits: alpha, beta, beta', and beta''. When a (nuclear-encoded) sigma factor is associated with the core the holoenzyme is formed, which can initiate transcription. Mg(2+) is required as a cofactor. Requires Zn(2+) as cofactor.

It is found in the plastid. The protein localises to the chloroplast. It carries out the reaction RNA(n) + a ribonucleoside 5'-triphosphate = RNA(n+1) + diphosphate. Functionally, DNA-dependent RNA polymerase catalyzes the transcription of DNA into RNA using the four ribonucleoside triphosphates as substrates. The sequence is that of DNA-directed RNA polymerase subunit beta' from Zea mays (Maize).